The primary structure comprises 101 residues: MDKSKRLFLKSKRSFRRRLPPIQSGDRIDYRNISLISRFISQQGKILSRRVNRLTLKQQRLITIAIKQARILSLLPFRPKAQRFKRSQSTARTVGLRTRNK.

It belongs to the bacterial ribosomal protein bS18 family. In terms of assembly, part of the 30S ribosomal subunit.

The protein resides in the plastid. It localises to the chloroplast. In Oenothera biennis (German evening primrose), this protein is Small ribosomal subunit protein bS18c.